We begin with the raw amino-acid sequence, 1175 residues long: Structural maintenance of chromosomes protein 2-1 (1175 aa).

The Zinc-hook domain maps to 2–1161 (HIKEICLEGF…NVLFRTKFVD (1160 aa)). ATP is bound at residue 32–39 (GLNGSGKS). Positions 172–508 (RMYENKKEAA…AQLANFQFTY (337 aa)) form a coiled coil. The SMC hinge domain occupies 518 to 638 (SKVKGVVAKL…KTTDVAKEVA (121 aa)). Residues 673–1028 (LRKLHDLAEA…ELDEKKKETL (356 aa)) are a coiled coil.

This sequence belongs to the SMC family. SMC2 subfamily. Forms a heterodimer with SMC4. Component of the condensin complex, which contains the SMC2 and SMC4 heterodimer, and three non SMC subunits that probably regulate the complex: CAPH, CAPD2 and CAPG. In terms of tissue distribution, highly expressed in roots and young floral buds.

It is found in the nucleus. Its function is as follows. Central component of the condensin complex, a complex required for conversion of interphase chromatin into mitotic-like condense chromosomes. The condensin complex probably introduces positive supercoils into relaxed DNA in the presence of type I topoisomerases and converts nicked DNA into positive knotted forms in the presence of type II topoisomerases. Also involved in chromosome segregation in meiosis. This chain is Structural maintenance of chromosomes protein 2-1 (SMC2-1), found in Arabidopsis thaliana (Mouse-ear cress).